A 155-amino-acid chain; its full sequence is Small ribosomal subunit protein uS7 (155 aa).

The protein belongs to the universal ribosomal protein uS7 family. Part of the 30S ribosomal subunit. Contacts proteins S9 and S11.

Functionally, one of the primary rRNA binding proteins, it binds directly to 16S rRNA where it nucleates assembly of the head domain of the 30S subunit. Is located at the subunit interface close to the decoding center, probably blocks exit of the E-site tRNA. The chain is Small ribosomal subunit protein uS7 from Thioalkalivibrio sulfidiphilus (strain HL-EbGR7).